The sequence spans 531 residues: MADILLLDNIDSFTWNLADQLRTNGHNVVIYRNHIPAQTLIDRLATMKNPVLMLSPGPGVPSEAGCMPELLTRLRGKLPIIGICLGHQAIVEAYGGYVGQAGEILHGKASSIEHDGQAMFAGLANPLPVARYHSLVGSNVPAGLTINAHFNGMVMAVRHDADRVCGFQFHPESILTTQGARLLEQTLAWAQQKLEPTNTLQPILEKLYQAQTLTQQESHQLFSAVVRGELKPEQLAAALVSMKIRGEHPNEIAGAATALLENAAPFPRPEYLFADIVGTGGDGSNSINISTASAFVAAACGLKVAKHGNRSVSSKSGSSDLLAAFGINLDMNADKSRQALDELGVCFLFAPKYHTGLRHAMPVRQQLKTRTLFNVLGPLINPAHPPLALIGVYSPELVLPIAETLRVLGYQRAAVVHSGGMDEVSLHAPTIVAELHDGEIKSYQLTAEDFGLTPYHQDQLAGGTPEENRDILTRLLQGKGDAAHEAAVAANVAMLMRLHGQEDLKANAQTVLDVLRNGTAYDRVTALAARG.

The Glutamine amidotransferase type-1 domain occupies 3 to 196 (DILLLDNIDS…LAWAQQKLEP (194 aa)). 57–59 (GPG) is an L-glutamine binding site. Residue cysteine 84 is the Nucleophile; for GATase activity of the active site. Residues glutamine 88 and 134 to 135 (SL) each bind L-glutamine. Residues histidine 170 and glutamate 172 each act as for GATase activity in the active site. Positions 202 to 531 (PILEKLYQAQ…DRVTALAARG (330 aa)) are anthranilate phosphoribosyltransferase.

This sequence in the C-terminal section; belongs to the anthranilate phosphoribosyltransferase family. As to quaternary structure, monomer. Heterotetramer consisting of two non-identical subunits: a beta subunit (TrpG) and a large alpha subunit (TrpE).

It catalyses the reaction chorismate + L-glutamine = anthranilate + pyruvate + L-glutamate + H(+). The enzyme catalyses N-(5-phospho-beta-D-ribosyl)anthranilate + diphosphate = 5-phospho-alpha-D-ribose 1-diphosphate + anthranilate. It functions in the pathway amino-acid biosynthesis; L-tryptophan biosynthesis; L-tryptophan from chorismate: step 1/5. It participates in amino-acid biosynthesis; L-tryptophan biosynthesis; L-tryptophan from chorismate: step 2/5. Cooperatively feedback inhibited by tryptophan. Part of a heterotetrameric complex that catalyzes the two-step biosynthesis of anthranilate, an intermediate in the biosynthesis of L-tryptophan. In the first step, the glutamine-binding beta subunit (TrpG) of anthranilate synthase (AS) provides the glutamine amidotransferase activity which generates ammonia as a substrate that, along with chorismate, is used in the second step, catalyzed by the large alpha subunit of AS (TrpE) to produce anthranilate. In the absence of TrpG, TrpE can synthesize anthranilate directly from chorismate and high concentrations of ammonia. In addition to synthesizing anthranilate, it also catalyzes the second step of the pathway, the transfer of the phosphoribosyl group of 5-phosphorylribose-1-pyrophosphate (PRPP) to anthranilate. This Salmonella typhimurium (strain LT2 / SGSC1412 / ATCC 700720) protein is Bifunctional protein TrpGD (trpGD).